A 396-amino-acid polypeptide reads, in one-letter code: 8-amino-7-oxononanoate synthase (396 aa).

A substrate-binding site is contributed by R19. 106 to 107 provides a ligand contact to pyridoxal 5'-phosphate; that stretch reads GY. H131 provides a ligand contact to substrate. Pyridoxal 5'-phosphate is bound by residues S176, H204, and T233. K236 is modified (N6-(pyridoxal phosphate)lysine). Residue T350 participates in substrate binding.

This sequence belongs to the class-II pyridoxal-phosphate-dependent aminotransferase family. BioF subfamily. In terms of assembly, homodimer. Pyridoxal 5'-phosphate serves as cofactor.

It catalyses the reaction 6-carboxyhexanoyl-[ACP] + L-alanine + H(+) = (8S)-8-amino-7-oxononanoate + holo-[ACP] + CO2. It participates in cofactor biosynthesis; biotin biosynthesis. Catalyzes the decarboxylative condensation of pimeloyl-[acyl-carrier protein] and L-alanine to produce 8-amino-7-oxononanoate (AON), [acyl-carrier protein], and carbon dioxide. In Pseudomonas syringae pv. tomato (strain ATCC BAA-871 / DC3000), this protein is 8-amino-7-oxononanoate synthase.